Consider the following 880-residue polypeptide: MKKLGVNEIRKEFLEFFRSKEHIIHPSAPLVPQKDKSLLLINSGMAPLKPYFAGLEEPPGKRMATCQKCIRTGDIENVGRTARHATFFEMLGNFSFGDYFKKESLTWGWEFVTKNLELPVDKLWATVYVDDDEAFEIWNKQIGLPEERIVRLGKADNFWEIGLGPCGPCSEIYFDRGEDYGCGCEECKPGCECDRYVEFWNHVFTQFDRDEEGNYHPLPNPNIDTGMGLERMACIMQGVDSIFDIDTMQDILNSVCKITSSEYKKDERTDVSIRIITDHVRSISLMIGDGILPSNEGRGYVLRRLLRRAARHGKLLGVNRAFLYELVDRVADNYGETYVELVDNKDYIKRVIKVEEERFMETIDQGMDILNQYIEELVTLKETVLSGVNAFKLYDTYGFPFDLTKEILEEKGLSLDETGFESEMEKQRQRARDARIGADTEGWKEDIFSGLDKEIQTAFKGYTNFEVEGKVLAIVSNDTVVEQCDKGKEATVILDETAFYGEGGGQVGDIGTLYNEAVRLSVLDTKKGPHNQVHHVVRVEEGTIKIGDEVKAKVDMVTRMSTARNHTATHLLHKALRDIVGEHVHQAGSLVTPDRLRFDFTHFEGLTKDQITQIEEKVNQQILMALDVRTFETSIEDAKKIGAQALFGEKYGDVVRVVKVGEYSTELCGGTHVTNSGEIGMFIMLSEAGVAAGVRRIEAITGMEAYKYVQKNQKTIQEIADTLKTQVQNVVERVADLVHETKEKDREINKLKSQLASNSTGDILDKATVVGGINVVVEVLENQEMDDLRKIGDVLKEKIGSGVIVLGSSNQDKVNFVAMATKDAVSKGVHAGNLVKEAAKIAGGGGGGRPDMAQAGGKNPQKIQEALDTVKEILVNQLNQ.

Zn(2+) is bound by residues His566, His570, Cys668, and His672.

This sequence belongs to the class-II aminoacyl-tRNA synthetase family. It depends on Zn(2+) as a cofactor.

It is found in the cytoplasm. It catalyses the reaction tRNA(Ala) + L-alanine + ATP = L-alanyl-tRNA(Ala) + AMP + diphosphate. In terms of biological role, catalyzes the attachment of alanine to tRNA(Ala) in a two-step reaction: alanine is first activated by ATP to form Ala-AMP and then transferred to the acceptor end of tRNA(Ala). Also edits incorrectly charged Ser-tRNA(Ala) and Gly-tRNA(Ala) via its editing domain. The polypeptide is Alanine--tRNA ligase (Alkaliphilus oremlandii (strain OhILAs) (Clostridium oremlandii (strain OhILAs))).